The sequence spans 360 residues: Peptide chain release factor 1 (360 aa).

Q235 is subject to N5-methylglutamine. Positions 285–308 (KRQEAEASERRNLLGSGDRSDRNR) are enriched in basic and acidic residues. Residues 285-313 (KRQEAEASERRNLLGSGDRSDRNRTYNFP) are disordered.

Belongs to the prokaryotic/mitochondrial release factor family. In terms of processing, methylated by PrmC. Methylation increases the termination efficiency of RF1.

It is found in the cytoplasm. Its function is as follows. Peptide chain release factor 1 directs the termination of translation in response to the peptide chain termination codons UAG and UAA. The sequence is that of Peptide chain release factor 1 from Photorhabdus laumondii subsp. laumondii (strain DSM 15139 / CIP 105565 / TT01) (Photorhabdus luminescens subsp. laumondii).